The following is a 311-amino-acid chain: Homeobox protein Hox-B1a (311 aa).

A DNA-binding region (homeobox) is located at residues 217–276 (QNTIRTNFTTKQLTELEKEFHFSKYLTRARRVEIAATLELNETQVKIWFQNRRMKQKKRE). The segment at 267–311 (NRRMKQKKREKEGLAPASSTSSKDLEDQSDHSTSTSPEASPSPDS) is disordered. A compositionally biased stretch (low complexity) spans 298–311 (STSTSPEASPSPDS).

This sequence belongs to the Antp homeobox family. Labial subfamily.

Its subcellular location is the nucleus. Functionally, sequence-specific transcription factor which is part of a developmental regulatory system that provides cells with specific positional identities on the anterior-posterior axis. This chain is Homeobox protein Hox-B1a (hoxb1a), found in Danio rerio (Zebrafish).